The sequence spans 658 residues: Integrator complex subunit 9 (658 aa).

A disordered region spans residues 550 to 574; sequence KHVLQLPPKPPQPPTSKKRKRVSDD. A Nuclear localization signal motif is present at residues 566–570; that stretch reads KKRKR.

It belongs to the metallo-beta-lactamase superfamily. RNA-metabolizing metallo-beta-lactamase-like family. INTS9 subfamily. As to quaternary structure, component of the Integrator complex, composed of core subunits INTS1, INTS2, INTS3, INTS4, INTS5, INTS6, INTS7, INTS8, INTS9/RC74, INTS10, INTS11/CPSF3L, INTS12, INTS13, INTS14 and INTS15. The core complex associates with protein phosphatase 2A subunits PPP2CA and PPP2R1A, to form the Integrator-PP2A (INTAC) complex. INTS9 is part of the RNA endonuclease subcomplex, composed of INTS4, INTS9, INTS11 and inositol hexakisphosphate (InsP6).

It localises to the nucleus. Its subcellular location is the cytoplasm. Functionally, component of the integrator complex, a multiprotein complex that terminates RNA polymerase II (Pol II) transcription in the promoter-proximal region of genes. The integrator complex provides a quality checkpoint during transcription elongation by driving premature transcription termination of transcripts that are unfavorably configured for transcriptional elongation: the complex terminates transcription by (1) catalyzing dephosphorylation of the C-terminal domain (CTD) of Pol II subunit POLR2A/RPB1 and SUPT5H/SPT5, (2) degrading the exiting nascent RNA transcript via endonuclease activity and (3) promoting the release of Pol II from bound DNA. The integrator complex is also involved in terminating the synthesis of non-coding Pol II transcripts, such as enhancer RNAs (eRNAs), small nuclear RNAs (snRNAs), telomerase RNAs and long non-coding RNAs (lncRNAs). This is Integrator complex subunit 9 (INTS9) from Gallus gallus (Chicken).